Reading from the N-terminus, the 259-residue chain is Cell division protein DivIB (259 aa).

Residues Met-1 to Arg-27 lie on the Cytoplasmic side of the membrane. The helical transmembrane segment at Leu-28–Phe-45 threads the bilayer. The Extracellular portion of the chain corresponds to Gln-46–Glu-259. The POTRA domain maps to Ser-50–Tyr-118.

The protein belongs to the FtsQ/DivIB family. DivIB subfamily.

Its subcellular location is the cell membrane. Cell division protein that may be involved in stabilizing or promoting the assembly of the division complex. The chain is Cell division protein DivIB from Bacillus selenitireducens (strain ATCC 700615 / DSM 15326 / MLS10).